Reading from the N-terminus, the 1135-residue chain is Phytochrome C (1135 aa).

The span at 1–11 (MSSPLNNRGTC) shows a compositional bias: polar residues. Positions 1-26 (MSSPLNNRGTCSRSSSARSRHSARVV) are disordered. The region spanning 216–399 (NLSLLCDVLV…VFGIQLNKEV (184 aa)) is the GAF domain. Residue cysteine 321 participates in phytochromobilin binding. PAS domains lie at 618–688 (VTNE…LQGI) and 748–822 (IQGD…TKLS). One can recognise a Histidine kinase domain in the interval 902–1122 (YIHQELRNPL…IILIEFPVAQ (221 aa)).

It belongs to the phytochrome family. Homodimer. Post-translationally, contains one covalently linked phytochromobilin chromophore.

In terms of biological role, regulatory photoreceptor which exists in two forms that are reversibly interconvertible by light: the Pr form that absorbs maximally in the red region of the spectrum and the Pfr form that absorbs maximally in the far-red region. Photoconversion of Pr to Pfr induces an array of morphogenic responses, whereas reconversion of Pfr to Pr cancels the induction of those responses. Pfr controls the expression of a number of nuclear genes including those encoding the small subunit of ribulose-bisphosphate carboxylase, chlorophyll A/B binding protein, protochlorophyllide reductase, rRNA, etc. It also controls the expression of its own gene(s) in a negative feedback fashion. This chain is Phytochrome C (PHYC), found in Sorghum bicolor (Sorghum).